Consider the following 196-residue polypeptide: Probable malonic semialdehyde reductase RutE (196 aa).

It belongs to the nitroreductase family. HadB/RutE subfamily. Requires FMN as cofactor.

It carries out the reaction 3-hydroxypropanoate + NADP(+) = 3-oxopropanoate + NADPH + H(+). May reduce toxic product malonic semialdehyde to 3-hydroxypropionic acid, which is excreted. This is Probable malonic semialdehyde reductase RutE from Yersinia enterocolitica serotype O:8 / biotype 1B (strain NCTC 13174 / 8081).